A 112-amino-acid polypeptide reads, in one-letter code: Protein FAM32A (112 aa).

The interval 23–58 (TKRKKKKKDKDKAKLLEAMGTSKKNEEEKRRGLDKR) is disordered. The segment covering 45–58 (KKNEEEKRRGLDKR) has biased composition (basic and acidic residues).

This sequence belongs to the FAM32 family.

It localises to the nucleus. May induce G2 arrest and apoptosis. May also increase cell sensitivity to apoptotic stimuli. This chain is Protein FAM32A (FAM32A), found in Bos taurus (Bovine).